We begin with the raw amino-acid sequence, 208 residues long: Small ribosomal subunit protein uS4 (208 aa).

An S4 RNA-binding domain is found at 98 to 158; the sequence is RRLDNIVYRL…EKSRKVASIN (61 aa).

The protein belongs to the universal ribosomal protein uS4 family. In terms of assembly, part of the 30S ribosomal subunit. Contacts protein S5. The interaction surface between S4 and S5 is involved in control of translational fidelity.

Functionally, one of the primary rRNA binding proteins, it binds directly to 16S rRNA where it nucleates assembly of the body of the 30S subunit. In terms of biological role, with S5 and S12 plays an important role in translational accuracy. The chain is Small ribosomal subunit protein uS4 from Geotalea daltonii (strain DSM 22248 / JCM 15807 / FRC-32) (Geobacter daltonii).